We begin with the raw amino-acid sequence, 293 residues long: Fructokinase (293 aa).

ATP is bound at residue T133. 4 residues coordinate Zn(2+): H156, C174, H177, and C180. ATP is bound by residues P188 and 236 to 240 (GVMAQ).

Belongs to the ROK (NagC/XylR) family. Mg(2+) is required as a cofactor.

It catalyses the reaction D-fructose + ATP = D-fructose 6-phosphate + ADP + H(+). Its activity is regulated as follows. Inhibition by zinc ions. The chain is Fructokinase (scrK) from Streptococcus mutans serotype c (strain ATCC 700610 / UA159).